A 228-amino-acid chain; its full sequence is Ribose-5-phosphate isomerase A (228 aa).

Substrate-binding positions include Thr-27–Thr-30, Asp-86–Asp-89, and Lys-100–Gly-103. Residue Glu-109 is the Proton acceptor of the active site. Lys-127 is a binding site for substrate.

This sequence belongs to the ribose 5-phosphate isomerase family. In terms of assembly, homodimer.

It carries out the reaction aldehydo-D-ribose 5-phosphate = D-ribulose 5-phosphate. It participates in carbohydrate degradation; pentose phosphate pathway; D-ribose 5-phosphate from D-ribulose 5-phosphate (non-oxidative stage): step 1/1. Functionally, catalyzes the reversible conversion of ribose-5-phosphate to ribulose 5-phosphate. The chain is Ribose-5-phosphate isomerase A from Borreliella burgdorferi (strain ZS7) (Borrelia burgdorferi).